A 179-amino-acid chain; its full sequence is ATP synthase subunit delta (179 aa).

Belongs to the ATPase delta chain family. In terms of assembly, F-type ATPases have 2 components, F(1) - the catalytic core - and F(0) - the membrane proton channel. F(1) has five subunits: alpha(3), beta(3), gamma(1), delta(1), epsilon(1). F(0) has three main subunits: a(1), b(2) and c(10-14). The alpha and beta chains form an alternating ring which encloses part of the gamma chain. F(1) is attached to F(0) by a central stalk formed by the gamma and epsilon chains, while a peripheral stalk is formed by the delta and b chains.

Its subcellular location is the cell membrane. In terms of biological role, f(1)F(0) ATP synthase produces ATP from ADP in the presence of a proton or sodium gradient. F-type ATPases consist of two structural domains, F(1) containing the extramembraneous catalytic core and F(0) containing the membrane proton channel, linked together by a central stalk and a peripheral stalk. During catalysis, ATP synthesis in the catalytic domain of F(1) is coupled via a rotary mechanism of the central stalk subunits to proton translocation. Functionally, this protein is part of the stalk that links CF(0) to CF(1). It either transmits conformational changes from CF(0) to CF(1) or is implicated in proton conduction. The sequence is that of ATP synthase subunit delta from Mycoplasmopsis pulmonis (strain UAB CTIP) (Mycoplasma pulmonis).